Consider the following 439-residue polypeptide: Adenylosuccinate synthetase (439 aa).

Residues 14–20 (GDEGKGK) and 42–44 (GHT) each bind GTP. The active-site Proton acceptor is D15. Positions 15 and 42 each coordinate Mg(2+). IMP is bound by residues 15-18 (DEGK), 40-43 (NAGH), T130, R144, Q225, T240, and R304. H43 serves as the catalytic Proton donor. Substrate is bound at residue 300–306 (TTTGRRR). GTP contacts are provided by residues R306, 332-334 (KLD), and 414-416 (SLG).

It belongs to the adenylosuccinate synthetase family. In terms of assembly, homodimer. Requires Mg(2+) as cofactor.

Its subcellular location is the cytoplasm. It catalyses the reaction IMP + L-aspartate + GTP = N(6)-(1,2-dicarboxyethyl)-AMP + GDP + phosphate + 2 H(+). The protein operates within purine metabolism; AMP biosynthesis via de novo pathway; AMP from IMP: step 1/2. In terms of biological role, plays an important role in the de novo pathway of purine nucleotide biosynthesis. Catalyzes the first committed step in the biosynthesis of AMP from IMP. The chain is Adenylosuccinate synthetase from Synechococcus sp. (strain CC9902).